The sequence spans 476 residues: MVEPQVAPIAPMMRRIRRIHFVGIGGVGMGGIAEVLLNLGYQISGSDLRKNQLIQRLLSLGAQIRIGHDPQHVEGCDVVVVSSAIDEDNTEVSAARGRLIPVVPRAEMLAELMRFRYGIAVAGTHGKTTTTSLIAGILGEANLDPTFVIGGQVNSIGANSRLGKGEYLVAEADESDASFLLLQPLLAVITNVDADHMDAYGGDFTALKAAFLEFLHHLPFYGLAVVCLDDPVLRELLPGIGRPVLTYGTCKEADYHLRELKQTQGQTQFQVARPGKDNWLTVVLNLPGAHNALNALAAIAVAHELGIADSAIQRFLKGFSGIGRRFQCYGEIATPAGKVLLVDDYGHHPRELAATLEAIRAGWPERRLVVIFQPHRYTRTRDLFEEFIRVLSQVDVLLLLEVYPAGEAPIGGADSRALWQAIQTHGQVSPILVEDKEIIGEMLFDLLQEGDLLLTVGAGDIGALARRLSISLEGKR.

123-129 (GTHGKTT) serves as a coordination point for ATP.

It belongs to the MurCDEF family.

It localises to the cytoplasm. It catalyses the reaction UDP-N-acetyl-alpha-D-muramate + L-alanine + ATP = UDP-N-acetyl-alpha-D-muramoyl-L-alanine + ADP + phosphate + H(+). It functions in the pathway cell wall biogenesis; peptidoglycan biosynthesis. In terms of biological role, cell wall formation. The protein is UDP-N-acetylmuramate--L-alanine ligase of Nitrosococcus oceani (strain ATCC 19707 / BCRC 17464 / JCM 30415 / NCIMB 11848 / C-107).